The sequence spans 229 residues: Prolactin (229 aa).

The signal sequence occupies residues 1 to 30 (MDSKGSSQKGSRLLLLLVVSNLLLCQGVVS). Residues Cys-34 and Cys-41 are joined by a disulfide bond. Phosphoserine is present on residues Ser-56, Ser-64, and Ser-120. 2 cysteine pairs are disulfide-bonded: Cys-88–Cys-204 and Cys-221–Cys-229.

It belongs to the somatotropin/prolactin family. In terms of assembly, interacts with PRLR.

Its subcellular location is the secreted. Prolactin acts primarily on the mammary gland by promoting lactation. The sequence is that of Prolactin (PRL) from Bos taurus (Bovine).